The following is a 469-amino-acid chain: tRNA-2-methylthio-N(6)-dimethylallyladenosine synthase (469 aa).

One can recognise an MTTase N-terminal domain in the interval 22–142 (RKVFIKTYGC…LPEALRRAQQ (121 aa)). [4Fe-4S] cluster-binding residues include Cys-31, Cys-67, Cys-105, Cys-183, Cys-187, and Cys-190. The region spanning 169–401 (RARGVTAFLT…QALLLKQQQE (233 aa)) is the Radical SAM core domain. The TRAM domain maps to 404-466 (ESCIGKEIDL…TNSLFAERAE (63 aa)).

Belongs to the methylthiotransferase family. MiaB subfamily. Monomer. [4Fe-4S] cluster serves as cofactor.

The protein resides in the cytoplasm. The catalysed reaction is N(6)-dimethylallyladenosine(37) in tRNA + (sulfur carrier)-SH + AH2 + 2 S-adenosyl-L-methionine = 2-methylsulfanyl-N(6)-dimethylallyladenosine(37) in tRNA + (sulfur carrier)-H + 5'-deoxyadenosine + L-methionine + A + S-adenosyl-L-homocysteine + 2 H(+). Catalyzes the methylthiolation of N6-(dimethylallyl)adenosine (i(6)A), leading to the formation of 2-methylthio-N6-(dimethylallyl)adenosine (ms(2)i(6)A) at position 37 in tRNAs that read codons beginning with uridine. This is tRNA-2-methylthio-N(6)-dimethylallyladenosine synthase from Rhizobium etli (strain CIAT 652).